The following is a 336-amino-acid chain: MEKHWVLWSCAERWLLALASWSWGLCRICLLPLILTFNMYGGVILLLLIFVSIAGILFKFQDVLLYFPDQPSSSRLYIPMPTGIPHENIFIKTKDNIRLNLILLRYTGDNSSFSPTIIYFHGNAGNIGHRLPNALLMLVNLKVNLILVDYRGYGKSDGEPSEEGLYMDSEAVLDYVMTRPDIDKTKIILFGRSLGGAVAIHLASENAHRICALVLENTFLSIPHMASTLFSVLPMRYLPLWCYKNKFLSYRKIVQCRMPSLFISGLSDQLIPPFMMKQLYELSPSRTKRLAIFPDGTHNDTWQCQGYFTALEQFIKELNSNHCPEANAKTSNVTII.

A helical; Signal-anchor for type II membrane protein transmembrane segment spans residues 37-57; it reads FNMYGGVILLLLIFVSIAGIL. Catalysis depends on charge relay system residues Ser-193, Asp-268, and His-298. The N-linked (GlcNAc...) asparagine glycan is linked to Asn-299.

Belongs to the serine esterase family.

Its subcellular location is the membrane. The protein is Protein ABHD13 of Xenopus laevis (African clawed frog).